Reading from the N-terminus, the 237-residue chain is Sugar fermentation stimulation protein homolog (237 aa).

Belongs to the SfsA family.

This chain is Sugar fermentation stimulation protein homolog, found in Pseudomonas putida (strain ATCC 47054 / DSM 6125 / CFBP 8728 / NCIMB 11950 / KT2440).